The primary structure comprises 369 residues: Chaperone protein DnaJ (369 aa).

The J domain maps to 4-69 (SYYEILEVEK…KKRALYDRYG (66 aa)). The segment at 130-207 (GCKKTIKVQY…CKGKTYILKD (78 aa)) adopts a CR-type zinc-finger fold. Residues Cys-143, Cys-146, Cys-159, Cys-162, Cys-181, Cys-184, Cys-195, and Cys-198 each coordinate Zn(2+). CXXCXGXG motif repeat units follow at residues 143–150 (CESCDGTG), 159–166 (CKQCNGQG), 181–188 (CGACQGKG), and 195–202 (CQACKGKT).

This sequence belongs to the DnaJ family. Homodimer. Requires Zn(2+) as cofactor.

The protein localises to the cytoplasm. In terms of biological role, participates actively in the response to hyperosmotic and heat shock by preventing the aggregation of stress-denatured proteins and by disaggregating proteins, also in an autonomous, DnaK-independent fashion. Unfolded proteins bind initially to DnaJ; upon interaction with the DnaJ-bound protein, DnaK hydrolyzes its bound ATP, resulting in the formation of a stable complex. GrpE releases ADP from DnaK; ATP binding to DnaK triggers the release of the substrate protein, thus completing the reaction cycle. Several rounds of ATP-dependent interactions between DnaJ, DnaK and GrpE are required for fully efficient folding. Also involved, together with DnaK and GrpE, in the DNA replication of plasmids through activation of initiation proteins. This is Chaperone protein DnaJ from Helicobacter pylori (strain ATCC 700392 / 26695) (Campylobacter pylori).